The primary structure comprises 152 residues: Small ribosomal subunit protein uS8m (152 aa).

This sequence belongs to the universal ribosomal protein uS8 family.

Its subcellular location is the mitochondrion. The chain is Small ribosomal subunit protein uS8m (RPS8) from Marchantia polymorpha (Common liverwort).